The chain runs to 142 residues: Protein lin-32 (142 aa).

Positions 30 to 48 (PLQSPNFSLDSPNYPDSLS) are enriched in polar residues. A disordered region spans residues 30–66 (PLQSPNFSLDSPNYPDSLSNGGGKDDKKKCRRYKTPS). In terms of domain architecture, bHLH spans 72–124 (MRRSAANERERRRMNTLNVAYDELREVLPEIDSGKKLSKFETLQMAQKYIECL).

Forms a heterodimer with hlh-2. In terms of tissue distribution, expressed in PVD motor neurons.

It localises to the nucleus. Its function is as follows. Probable transcription factor which binds the E box motif 5'-CA[TC][AG]TG-3'. Essential for the specification of the neuroblast cell fate in the development of peripheral sense organs. Its role in the generation of sensory neurons may be through positively regulating the expression of the zinc finger protein ztf-11 during postdeirid neurogenesis. Required for specification of cell fate, acting in concert with lin-32, in the development of the male-specific genital sensilla (simple sense organs) known as rays. Involved in regulating glial specification, perhaps by suppressing a glial fate in different lineages during early embryogenesis. This is Protein lin-32 from Caenorhabditis elegans.